A 598-amino-acid chain; its full sequence is Elongation factor 4 (598 aa).

Residues 2–184 (KNIRNFSIIA…EIVRCIPPPV (183 aa)) form the tr-type G domain. Residues 14–19 (DHGKST) and 131–134 (NKID) contribute to the GTP site.

The protein belongs to the TRAFAC class translation factor GTPase superfamily. Classic translation factor GTPase family. LepA subfamily.

The protein resides in the cell inner membrane. The catalysed reaction is GTP + H2O = GDP + phosphate + H(+). Required for accurate and efficient protein synthesis under certain stress conditions. May act as a fidelity factor of the translation reaction, by catalyzing a one-codon backward translocation of tRNAs on improperly translocated ribosomes. Back-translocation proceeds from a post-translocation (POST) complex to a pre-translocation (PRE) complex, thus giving elongation factor G a second chance to translocate the tRNAs correctly. Binds to ribosomes in a GTP-dependent manner. The chain is Elongation factor 4 from Psychromonas ingrahamii (strain DSM 17664 / CCUG 51855 / 37).